We begin with the raw amino-acid sequence, 755 residues long: uncharacterized protein (755 aa).

9 helical membrane-spanning segments follow: residues 46 to 66 (LGLG…GGLY), 70 to 90 (LKTI…GTIV), 93 to 113 (GWGL…YLAV), 118 to 138 (GAMV…NVST), 143 to 163 (FTSL…IWPF), 411 to 431 (IAHL…IFVL), 446 to 466 (LLGT…IQDP), 482 to 502 (ALLR…ALIL), and 514 to 534 (ALLS…GLAF).

The protein belongs to the YccS/YhfK family.

The protein resides in the cell membrane. This is an uncharacterized protein from Synechocystis sp. (strain ATCC 27184 / PCC 6803 / Kazusa).